The chain runs to 437 residues: Transcription factor E2F2 (437 aa).

A cyclin A/CDK2 binding region spans residues 65 to 105 (ATPHGPEGQVVRCLPAGRLPAKRKLDLEGIGRPVVPEFPTP). A DNA-binding region spans residues 107–196 (GKCIRVDGLP…KNNIQWVGRG (90 aa)). Positions 155–176 (LNWAAEVLDVQKRRIYDITNVL) are leucine-zipper. The DEF box signature appears at 160 to 196 (EVLDVQKRRIYDITNVLEGIQLIRKKAKNNIQWVGRG). The tract at residues 197–289 (MFEDPTRPGK…PDRTEDNLQI (93 aa)) is dimerization. The interval 307 to 368 (VQEPDSPSEE…APPPPSLVPL (62 aa)) is disordered. Low complexity predominate over residues 315 to 330 (EEPLPSTSTLCPSPDS). A compositionally biased stretch (pro residues) spans 351 to 365 (APAPTPQQAPPPPSL). Positions 359–437 (APPPPSLVPL…SYDLGDLLIN (79 aa)) are transactivation. The tract at residues 410–427 (DDYLWGLEAGEGISDLFD) is retinoblastoma protein binding.

The protein belongs to the E2F/DP family. Component of the DRTF1/E2F transcription factor complex. Forms heterodimers with DP family members. The E2F2 complex binds specifically hypophosphorylated retinoblastoma protein RB1. During the cell cycle, RB1 becomes phosphorylated in mid-to-late G1 phase, detaches from the DRTF1/E2F complex, rendering E2F transcriptionally active. Viral oncoproteins, notably E1A, T-antigen and HPV E7, are capable of sequestering RB1, thus releasing the active complex. Binds EAPP. Phosphorylated by CDK2 and cyclin A-CDK2 in the S-phase. As to expression, highest level of expression is found in placenta, low levels are found in lung. Found as well in many immortalized cell lines derived from tumor samples.

The protein resides in the nucleus. In terms of biological role, transcription activator that binds DNA cooperatively with DP proteins through the E2 recognition site, 5'-TTTC[CG]CGC-3' found in the promoter region of a number of genes whose products are involved in cell cycle regulation or in DNA replication. The DRTF1/E2F complex functions in the control of cell-cycle progression from g1 to s phase. E2F2 binds specifically to RB1 in a cell-cycle dependent manner. The polypeptide is Transcription factor E2F2 (E2F2) (Homo sapiens (Human)).